Reading from the N-terminus, the 467-residue chain is Dynactin subunit 4 (467 aa).

An N-acetylalanine modification is found at Ala2. Lys222 participates in a covalent cross-link: Glycyl lysine isopeptide (Lys-Gly) (interchain with G-Cter in SUMO2). A Phosphothreonine modification is found at Thr414.

This sequence belongs to the dynactin subunit 4 family. As to quaternary structure, subunit of dynactin, a multiprotein complex part of a tripartite complex with dynein and a adapter, such as BICDL1, BICD2 or HOOK3. The dynactin complex is built around ACTR1A/ACTB filament and consists of an actin-related filament composed of a shoulder domain, a pointed end and a barbed end. Its length is defined by its flexible shoulder domain. The soulder is composed of 2 DCTN1 subunits, 4 DCTN2 and 2 DCTN3. The 4 DCNT2 (via N-terminus) bind the ACTR1A filament and act as molecular rulers to determine the length. The pointed end is important for binding dynein-dynactin cargo adapters. Consists of 4 subunits: ACTR10, DCNT4, DCTN5 and DCTN6. The barbed end is composed of a CAPZA1:CAPZB heterodimers, which binds ACTR1A/ACTB filament and dynactin and stabilizes dynactin. Interacts with ATP7B, but not ATP7A, in a copper-dependent manner. Interacts with ANK2; this interaction is required for localization at costameres. Interacts with N4BP2L1.

Its subcellular location is the cytoplasm. The protein localises to the cytoskeleton. The protein resides in the microtubule organizing center. It is found in the centrosome. It localises to the stress fiber. Its subcellular location is the cell cortex. The protein localises to the myofibril. The protein resides in the sarcomere. Functionally, part of the dynactin complex that activates the molecular motor dynein for ultra-processive transport along microtubules. Together with dynein is involved in spindle assembly and cytokinesis. This Sus scrofa (Pig) protein is Dynactin subunit 4 (DCTN4).